The primary structure comprises 370 residues: DNA replication and repair protein RecF (370 aa).

G30–T37 contributes to the ATP binding site.

The protein belongs to the RecF family. As to quaternary structure, recruited to foci following DNA damage; probably interacts with RecO.

It localises to the cytoplasm. The protein resides in the nucleoid. The RecF protein is involved in DNA metabolism; it is required for DNA replication and normal SOS inducibility. RecF binds preferentially to single-stranded, linear DNA. It also seems to bind ATP. Is recruited to repair centers, foci that are the site of double-strand DNA break(s) after RecN and RecO; recruitment may depend on RecO. A positive modulator of RecA. The chain is DNA replication and repair protein RecF from Bacillus subtilis (strain 168).